Reading from the N-terminus, the 443-residue chain is D-inositol 3-phosphate glycosyltransferase (443 aa).

1D-myo-inositol 3-phosphate is bound at residue H30. Residues 36–37 (QP) and G44 contribute to the UDP-N-acetyl-alpha-D-glucosamine site. 1D-myo-inositol 3-phosphate contacts are provided by residues 41–46 (DAGGMN), K99, Y132, T156, and R176. Residues R250, K255, and R316 each coordinate UDP-N-acetyl-alpha-D-glucosamine. F325, R326, and C328 together coordinate Mg(2+). 2 residues coordinate UDP-N-acetyl-alpha-D-glucosamine: E338 and E346. T352 lines the Mg(2+) pocket.

The protein belongs to the glycosyltransferase group 1 family. MshA subfamily. Homodimer.

It catalyses the reaction 1D-myo-inositol 3-phosphate + UDP-N-acetyl-alpha-D-glucosamine = 1D-myo-inositol 2-acetamido-2-deoxy-alpha-D-glucopyranoside 3-phosphate + UDP + H(+). In terms of biological role, catalyzes the transfer of a N-acetyl-glucosamine moiety to 1D-myo-inositol 3-phosphate to produce 1D-myo-inositol 2-acetamido-2-deoxy-glucopyranoside 3-phosphate in the mycothiol biosynthesis pathway. The sequence is that of D-inositol 3-phosphate glycosyltransferase from Stackebrandtia nassauensis (strain DSM 44728 / CIP 108903 / NRRL B-16338 / NBRC 102104 / LLR-40K-21).